Reading from the N-terminus, the 350-residue chain is MANYTSAPEDDYDVFIEDDLSNDERELCSPYDPQALLAQLVPYLFITVFLVGLLDNILVVLIMVKYKGLKQVENIYLLNLAVCNLCFLCTLPFWVHMAWHEGDPGEPLCKILLVLYSVGLFSEAFFNVLLTVQRYQKFFQMRGFFSATRMVAGSIFPSALVWVIAVLVMLPELAFYKPQMENQKYKCFFGRPLFLPADETFWKHFLTLKMNILGFLLPLFVFVFCYVRMRRTLKFGERGYDLFKLVFTIMVVFLLMWGPYNIALFLSAFNEHFSLHGCESSHNLDRSTLITKIIATTHCCVNPLLYVFFDEAFRKHLYHFCHLCNDTAPQPTEEPAQGTSREEPCLSTKM.

Over 1–43 the chain is Extracellular; that stretch reads MANYTSAPEDDYDVFIEDDLSNDERELCSPYDPQALLAQLVPY. Asn3 is a glycosylation site (N-linked (GlcNAc...) asparagine). A helical transmembrane segment spans residues 44–64; that stretch reads LFITVFLVGLLDNILVVLIMV. At 65–74 the chain is on the cytoplasmic side; it reads KYKGLKQVEN. The chain crosses the membrane as a helical span at residues 75–95; the sequence is IYLLNLAVCNLCFLCTLPFWV. Topologically, residues 96–110 are extracellular; it reads HMAWHEGDPGEPLCK. Cysteines 109 and 187 form a disulfide. Residues 111–131 form a helical membrane-spanning segment; it reads ILLVLYSVGLFSEAFFNVLLT. At 132–149 the chain is on the cytoplasmic side; the sequence is VQRYQKFFQMRGFFSATR. A helical membrane pass occupies residues 150 to 170; sequence MVAGSIFPSALVWVIAVLVML. The Extracellular segment spans residues 171–204; sequence PELAFYKPQMENQKYKCFFGRPLFLPADETFWKH. A helical membrane pass occupies residues 205 to 225; sequence FLTLKMNILGFLLPLFVFVFC. Residues 226 to 244 lie on the Cytoplasmic side of the membrane; the sequence is YVRMRRTLKFGERGYDLFK. Residues 245–265 traverse the membrane as a helical segment; it reads LVFTIMVVFLLMWGPYNIALF. Residues 266-288 lie on the Extracellular side of the membrane; it reads LSAFNEHFSLHGCESSHNLDRST. A helical membrane pass occupies residues 289–309; sequence LITKIIATTHCCVNPLLYVFF. Residues 310-350 are Cytoplasmic-facing; the sequence is DEAFRKHLYHFCHLCNDTAPQPTEEPAQGTSREEPCLSTKM. Positions 329–350 are disordered; it reads PQPTEEPAQGTSREEPCLSTKM.

This sequence belongs to the G-protein coupled receptor 1 family.

Its subcellular location is the cell membrane. Receptor for CCL19 and chemerin/RARRES2. Does not appear to be a signaling receptor, but may have a role in modulating chemokine-triggered immune responses by capturing and internalizing CCL19 or by presenting RARRES2 ligand to CMKLR1, a functional signaling receptor. Plays a critical role for the development of Th2 responses. In Sus scrofa (Pig), this protein is Chemokine C-C motif receptor-like 2 (CCRL2).